The following is a 296-amino-acid chain: Ribosomal RNA small subunit methyltransferase H (296 aa).

Residues 41 to 43, D59, F86, D104, and Q111 contribute to the S-adenosyl-L-methionine site; that span reads GGY.

This sequence belongs to the methyltransferase superfamily. RsmH family.

The protein localises to the cytoplasm. The catalysed reaction is cytidine(1402) in 16S rRNA + S-adenosyl-L-methionine = N(4)-methylcytidine(1402) in 16S rRNA + S-adenosyl-L-homocysteine + H(+). Functionally, specifically methylates the N4 position of cytidine in position 1402 (C1402) of 16S rRNA. The chain is Ribosomal RNA small subunit methyltransferase H from Neorickettsia sennetsu (strain ATCC VR-367 / Miyayama) (Ehrlichia sennetsu).